Reading from the N-terminus, the 245-residue chain is tRNA (guanine-N(1)-)-methyltransferase (245 aa).

S-adenosyl-L-methionine-binding positions include G111 and 131–136; that span reads MGDYVL.

The protein belongs to the RNA methyltransferase TrmD family. In terms of assembly, homodimer.

It localises to the cytoplasm. The enzyme catalyses guanosine(37) in tRNA + S-adenosyl-L-methionine = N(1)-methylguanosine(37) in tRNA + S-adenosyl-L-homocysteine + H(+). Its function is as follows. Specifically methylates guanosine-37 in various tRNAs. This chain is tRNA (guanine-N(1)-)-methyltransferase, found in Staphylococcus aureus (strain Mu3 / ATCC 700698).